Consider the following 716-residue polypeptide: Polyribonucleotide nucleotidyltransferase (716 aa).

Mg(2+)-binding residues include Asp-480 and Asp-486. The 60-residue stretch at 547–606 folds into the KH domain; that stretch reads PKIVQLQIDIDKISLVIGSTGKTVKAITDEFEVKVQIEQNGKIILFGDDDFKMQKAKERI. Residues 616–711 enclose the S1 motif domain; that stretch reads GEIYEGTVKK…KFGKIDLEIV (96 aa).

This sequence belongs to the polyribonucleotide nucleotidyltransferase family. Requires Mg(2+) as cofactor.

Its subcellular location is the cytoplasm. The catalysed reaction is RNA(n+1) + phosphate = RNA(n) + a ribonucleoside 5'-diphosphate. Functionally, involved in mRNA degradation. Catalyzes the phosphorolysis of single-stranded polyribonucleotides processively in the 3'- to 5'-direction. The protein is Polyribonucleotide nucleotidyltransferase of Borreliella burgdorferi (strain ATCC 35210 / DSM 4680 / CIP 102532 / B31) (Borrelia burgdorferi).